The sequence spans 339 residues: Serine/threonine-protein kinase pdik1l-A (339 aa).

One can recognise a Protein kinase domain in the interval 8–332 (YDLIREVGRG…LELKLIQIAF (325 aa)). ATP is bound by residues 14–22 (VGRGSYGVV) and K37. D164 serves as the catalytic Proton acceptor.

The protein belongs to the protein kinase superfamily. Ser/Thr protein kinase family.

The protein resides in the nucleus. It catalyses the reaction L-seryl-[protein] + ATP = O-phospho-L-seryl-[protein] + ADP + H(+). The enzyme catalyses L-threonyl-[protein] + ATP = O-phospho-L-threonyl-[protein] + ADP + H(+). The polypeptide is Serine/threonine-protein kinase pdik1l-A (pdik1-a) (Xenopus laevis (African clawed frog)).